The following is a 123-amino-acid chain: Non-specific lipid-transfer protein 3 (123 aa).

Residues 1 to 25 form the signal peptide; sequence MASSGQLLKLVCLVAVMCCMAVGGP. 4 disulfides stabilise this stretch: Cys33–Cys80, Cys43–Cys57, Cys58–Cys105, and Cys78–Cys119.

It belongs to the plant LTP family.

In terms of biological role, plant non-specific lipid-transfer proteins transfer phospholipids as well as galactolipids across membranes. May play a role in wax or cutin deposition in the cell walls of expanding epidermal cells and certain secretory tissues. This chain is Non-specific lipid-transfer protein 3, found in Prunus dulcis (Almond).